The sequence spans 283 residues: Phosphatidylglycerol--prolipoprotein diacylglyceryl transferase (283 aa).

The next 7 membrane-spanning stretches (helical) occupy residues 21–41 (LAVRWYGLMYLFGFMFALWLA), 60–80 (LLFAGFLGVVIGGRVGYVLFY), 95–115 (VWTGGMSFHGGLLGVISAMLW), 124–144 (FFTIADFVAPLVPFGLGAGRL), 176–196 (SQLYEFALEGVVLFFILNWFI), 203–223 (GAVSGLFLFGYGTFRFLVEYV), and 239–259 (MGQILSLPMVIGGLLMMLWAF). A 1,2-diacyl-sn-glycero-3-phospho-(1'-sn-glycerol) is bound at residue Arg-143.

The protein belongs to the Lgt family.

It localises to the cell inner membrane. It carries out the reaction L-cysteinyl-[prolipoprotein] + a 1,2-diacyl-sn-glycero-3-phospho-(1'-sn-glycerol) = an S-1,2-diacyl-sn-glyceryl-L-cysteinyl-[prolipoprotein] + sn-glycerol 1-phosphate + H(+). It participates in protein modification; lipoprotein biosynthesis (diacylglyceryl transfer). Catalyzes the transfer of the diacylglyceryl group from phosphatidylglycerol to the sulfhydryl group of the N-terminal cysteine of a prolipoprotein, the first step in the formation of mature lipoproteins. This Aliivibrio fischeri (strain MJ11) (Vibrio fischeri) protein is Phosphatidylglycerol--prolipoprotein diacylglyceryl transferase.